Consider the following 95-residue polypeptide: Large ribosomal subunit protein bL25 (95 aa).

The protein belongs to the bacterial ribosomal protein bL25 family. Part of the 50S ribosomal subunit; part of the 5S rRNA/L5/L18/L25 subcomplex. Contacts the 5S rRNA. Binds to the 5S rRNA independently of L5 and L18.

This is one of the proteins that binds to the 5S RNA in the ribosome where it forms part of the central protuberance. The polypeptide is Large ribosomal subunit protein bL25 (Shewanella sediminis (strain HAW-EB3)).